The primary structure comprises 426 residues: Mitogen-activated protein kinase 8 (426 aa).

The region spanning 26 to 321 is the Protein kinase domain; sequence YQNLKPIGSG…VDDALQHPYI (296 aa). ATP-binding positions include 33 to 38 and lysine 55; that span reads GSGAQG. Residue aspartate 151 is the Proton acceptor of the active site. At threonine 183 the chain carries Phosphothreonine. A TXY motif is present at residues 183-185; it reads TPY. A Phosphotyrosine modification is found at tyrosine 185. Positions 375-426 are disordered; it reads QPAPLGAAVTDGSQAHTSSSSGDASSMSTDPTLPSDTDSSLETSAGTLGCCR. Residues 384–404 show a composition bias toward low complexity; sequence TDGSQAHTSSSSGDASSMSTD. Positions 405–420 are enriched in polar residues; that stretch reads PTLPSDTDSSLETSAG.

Belongs to the protein kinase superfamily. CMGC Ser/Thr protein kinase family. MAP kinase subfamily. The cofactor is Mg(2+). Dually phosphorylated on Thr-183 and Tyr-185, which activates the enzyme. Strongly expressed in presumptive ectoderm and mesoderm regions and weakly expressed in endoderm regions during early stages of embryo development. Expressed in the head and dorsal regions during neurula and tailbud stages.

It is found in the cytoplasm. Its subcellular location is the nucleus. The protein resides in the synapse. It carries out the reaction L-seryl-[protein] + ATP = O-phospho-L-seryl-[protein] + ADP + H(+). The catalysed reaction is L-threonyl-[protein] + ATP = O-phospho-L-threonyl-[protein] + ADP + H(+). With respect to regulation, activated by threonine and tyrosine phosphorylation, potentially by the dual-specificity kinase, MKK7. Indirectly activated by Wnt5a. In terms of biological role, responds to activation by environmental stress and pro-inflammatory cytokines by phosphorylating a number of transcription factors, and thus regulating transcriptional activity. Regulates morphogenic cell movements, controlling convergent extension during gastrulation. May play a role in the regulation of the circadian clock. This Xenopus laevis (African clawed frog) protein is Mitogen-activated protein kinase 8 (mapk8).